Consider the following 923-residue polypeptide: Isoleucine--tRNA ligase (923 aa).

The 'HIGH' region motif lies at 57–67 (PYANGHIHIGH). Glu-560 contacts L-isoleucyl-5'-AMP. A 'KMSKS' region motif is present at residues 601 to 605 (KMSKS). ATP is bound at residue Lys-604. Positions 895, 898, 915, and 918 each coordinate Zn(2+).

This sequence belongs to the class-I aminoacyl-tRNA synthetase family. IleS type 1 subfamily. Monomer. Zn(2+) serves as cofactor.

It localises to the cytoplasm. The enzyme catalyses tRNA(Ile) + L-isoleucine + ATP = L-isoleucyl-tRNA(Ile) + AMP + diphosphate. Its function is as follows. Catalyzes the attachment of isoleucine to tRNA(Ile). As IleRS can inadvertently accommodate and process structurally similar amino acids such as valine, to avoid such errors it has two additional distinct tRNA(Ile)-dependent editing activities. One activity is designated as 'pretransfer' editing and involves the hydrolysis of activated Val-AMP. The other activity is designated 'posttransfer' editing and involves deacylation of mischarged Val-tRNA(Ile). In Geobacter sulfurreducens (strain ATCC 51573 / DSM 12127 / PCA), this protein is Isoleucine--tRNA ligase.